We begin with the raw amino-acid sequence, 358 residues long: Alanine racemase (358 aa).

Lysine 35 (proton acceptor; specific for D-alanine) is an active-site residue. Position 35 is an N6-(pyridoxal phosphate)lysine (lysine 35). Arginine 130 is a binding site for substrate. Tyrosine 255 (proton acceptor; specific for L-alanine) is an active-site residue. Residue methionine 303 participates in substrate binding.

It belongs to the alanine racemase family. Pyridoxal 5'-phosphate serves as cofactor.

The catalysed reaction is L-alanine = D-alanine. It functions in the pathway amino-acid biosynthesis; D-alanine biosynthesis; D-alanine from L-alanine: step 1/1. Catalyzes the interconversion of L-alanine and D-alanine. May also act on other amino acids. This Shewanella oneidensis (strain ATCC 700550 / JCM 31522 / CIP 106686 / LMG 19005 / NCIMB 14063 / MR-1) protein is Alanine racemase (alr).